A 591-amino-acid polypeptide reads, in one-letter code: Aspartate--tRNA(Asp/Asn) ligase (591 aa).

Glutamate 174 serves as a coordination point for L-aspartate. Residues 198–201 are aspartate; the sequence is QLFK. Arginine 220 contacts L-aspartate. ATP-binding positions include 220 to 222 and glutamine 229; that span reads RDE. Histidine 450 lines the L-aspartate pocket. Glutamate 483 lines the ATP pocket. Arginine 490 provides a ligand contact to L-aspartate. 535–538 serves as a coordination point for ATP; it reads GLDR.

Belongs to the class-II aminoacyl-tRNA synthetase family. Type 1 subfamily. In terms of assembly, homodimer.

It localises to the cytoplasm. The enzyme catalyses tRNA(Asx) + L-aspartate + ATP = L-aspartyl-tRNA(Asx) + AMP + diphosphate. In terms of biological role, aspartyl-tRNA synthetase with relaxed tRNA specificity since it is able to aspartylate not only its cognate tRNA(Asp) but also tRNA(Asn). Reaction proceeds in two steps: L-aspartate is first activated by ATP to form Asp-AMP and then transferred to the acceptor end of tRNA(Asp/Asn). This Pseudomonas syringae pv. tomato (strain ATCC BAA-871 / DC3000) protein is Aspartate--tRNA(Asp/Asn) ligase.